A 647-amino-acid chain; its full sequence is Putative ankyrin repeat protein L764 (647 aa).

9 ANK repeats span residues 123–154, 202–231, 233–256, 258–284, 289–319, 348–377, 401–431, 529–558, and 588–617; these read LKDR…QINL, LTQE…EYDL, EIIN…SLNE, NVNI…TINS, SMFS…DLTV, DCNL…DLKK, NDVN…NIDL, FILK…DNNE, and NGQN…DVKN.

The chain is Putative ankyrin repeat protein L764 from Acanthamoeba polyphaga (Amoeba).